Reading from the N-terminus, the 30-residue chain is Dermonecrotic toxin LlSicTox-alphaIII-1 (30 aa).

Residue histidine 12 is part of the active site.

Belongs to the arthropod phospholipase D family. Class I subfamily. Mg(2+) serves as cofactor. In terms of processing, contains 1 disulfide bond. As to expression, expressed by the venom gland.

The protein localises to the secreted. It catalyses the reaction an N-(acyl)-sphingosylphosphocholine = an N-(acyl)-sphingosyl-1,3-cyclic phosphate + choline. The enzyme catalyses an N-(acyl)-sphingosylphosphoethanolamine = an N-(acyl)-sphingosyl-1,3-cyclic phosphate + ethanolamine. It carries out the reaction a 1-acyl-sn-glycero-3-phosphocholine = a 1-acyl-sn-glycero-2,3-cyclic phosphate + choline. The catalysed reaction is a 1-acyl-sn-glycero-3-phosphoethanolamine = a 1-acyl-sn-glycero-2,3-cyclic phosphate + ethanolamine. Functionally, dermonecrotic toxins cleave the phosphodiester linkage between the phosphate and headgroup of certain phospholipids (sphingolipid and lysolipid substrates), forming an alcohol (often choline) and a cyclic phosphate. This toxin acts on sphingomyelin (SM). It may also act on ceramide phosphoethanolamine (CPE), lysophosphatidylcholine (LPC) and lysophosphatidylethanolamine (LPE), but not on lysophosphatidylserine (LPS), and lysophosphatidylglycerol (LPG). It acts by transphosphatidylation, releasing exclusively cyclic phosphate products as second products. In vivo, intradermal injection induces dermonecrosis. Induces hemolysis, increased vascular permeability, edema, inflammatory response, and platelet aggregation. The protein is Dermonecrotic toxin LlSicTox-alphaIII-1 of Loxosceles laeta (South American recluse spider).